A 299-amino-acid polypeptide reads, in one-letter code: Tyrosine recombinase XerC (299 aa).

In terms of domain architecture, Core-binding (CB) spans 1-85; the sequence is MQADLDAFLD…ALRGFYRYLL (85 aa). The Tyr recombinase domain maps to 106–285; that stretch reads RLPRTLDADR…DFQHLAAVYD (180 aa). Catalysis depends on residues arginine 146, lysine 170, histidine 237, arginine 240, and histidine 263. Tyrosine 272 serves as the catalytic O-(3'-phospho-DNA)-tyrosine intermediate.

It belongs to the 'phage' integrase family. XerC subfamily. In terms of assembly, forms a cyclic heterotetrameric complex composed of two molecules of XerC and two molecules of XerD.

The protein localises to the cytoplasm. Its function is as follows. Site-specific tyrosine recombinase, which acts by catalyzing the cutting and rejoining of the recombining DNA molecules. The XerC-XerD complex is essential to convert dimers of the bacterial chromosome into monomers to permit their segregation at cell division. It also contributes to the segregational stability of plasmids. This Azotobacter vinelandii (strain DJ / ATCC BAA-1303) protein is Tyrosine recombinase XerC.